Reading from the N-terminus, the 393-residue chain is NAD(P)H-quinone oxidoreductase subunit H, chloroplastic (393 aa).

The protein belongs to the complex I 49 kDa subunit family. As to quaternary structure, NDH is composed of at least 16 different subunits, 5 of which are encoded in the nucleus.

It is found in the plastid. The protein localises to the chloroplast thylakoid membrane. The catalysed reaction is a plastoquinone + NADH + (n+1) H(+)(in) = a plastoquinol + NAD(+) + n H(+)(out). The enzyme catalyses a plastoquinone + NADPH + (n+1) H(+)(in) = a plastoquinol + NADP(+) + n H(+)(out). Its function is as follows. NDH shuttles electrons from NAD(P)H:plastoquinone, via FMN and iron-sulfur (Fe-S) centers, to quinones in the photosynthetic chain and possibly in a chloroplast respiratory chain. The immediate electron acceptor for the enzyme in this species is believed to be plastoquinone. Couples the redox reaction to proton translocation, and thus conserves the redox energy in a proton gradient. This is NAD(P)H-quinone oxidoreductase subunit H, chloroplastic from Ranunculus macranthus (Large buttercup).